Reading from the N-terminus, the 221-residue chain is Thymidylate kinase (221 aa).

10 to 17 (GIDGAGKT) lines the ATP pocket.

Belongs to the thymidylate kinase family.

It carries out the reaction dTMP + ATP = dTDP + ADP. Its function is as follows. Phosphorylation of dTMP to form dTDP in both de novo and salvage pathways of dTTP synthesis. The sequence is that of Thymidylate kinase from Desulforudis audaxviator (strain MP104C).